Here is a 377-residue protein sequence, read N- to C-terminus: DnaJ-related protein SCJ1 (377 aa).

The first 21 residues, 1 to 21, serve as a signal peptide directing secretion; that stretch reads MIPKLYIHLILSLLLLPLILA. One can recognise a J domain in the interval 23-88; sequence DYYAILEIDK…EKKKIYDQFG (66 aa). The CR-type zinc finger occupies 156–237; it reads GSSIEFTLNL…CHGKKVTKKN (82 aa). 4 CXXCXGXG motif repeats span residues 169-176, 185-192, 211-218, and 225-232; these read CDACHGSG, CPDCQGRG, CGRCGGTG, and CKTCHGKK. The Cell attachment site motif lies at 288–290; the sequence is RGD. Residues 374 to 377 carry the Prevents secretion from ER motif; the sequence is KDEL.

Its subcellular location is the endoplasmic reticulum lumen. Functionally, regulates protein folding in the endoplasmic reticulum lumen. Probably acts as a J-protein for the Hsp70-type chaperone KAR2 by stimulating its ATP-dependent reaction cycle and initiating folding reactions. Also involved in the endoplasmic reticulum-associated degradation (ERAD) process. Cooperates with KAR2 and another J-protein JEM1 to facilitate the export of ERAD substrates to the cytoplasm by maintaining them in a translocation-competent state and preventing their aggregation in the endoplasmic reticulum lumen. The sequence is that of DnaJ-related protein SCJ1 (SCJ1) from Saccharomyces cerevisiae (strain ATCC 204508 / S288c) (Baker's yeast).